The sequence spans 667 residues: Putative L-type lectin-domain containing receptor kinase I.4 (667 aa).

An N-terminal signal peptide occupies residues 1–21 (MDCRLHLVLFFSCVCLICLSG). Residues 22-294 (QQETGFVYNG…PREEKKKLHP (273 aa)) lie on the Extracellular side of the membrane. The interval 24 to 257 (ETGFVYNGFH…NQYILGWSFS (234 aa)) is legume-lectin like. N-linked (GlcNAc...) asparagine glycans are attached at residues asparagine 55, asparagine 110, asparagine 124, asparagine 128, asparagine 181, asparagine 204, and asparagine 225. The chain crosses the membrane as a helical span at residues 295–315 (LLIGLVILLVIPVLMVLGGVY). At 316–667 (WYRRKKYAEV…THSILEGYGR (352 aa)) the chain is on the cytoplasmic side. One can recognise a Protein kinase domain in the interval 350–625 (FVKDALVGKG…QYLSQKQPLP (276 aa)). ATP contacts are provided by residues 356 to 364 (VGKGGFGKV) and lysine 378. Aspartate 474 (proton acceptor) is an active-site residue.

This sequence in the C-terminal section; belongs to the protein kinase superfamily. Ser/Thr protein kinase family. It in the N-terminal section; belongs to the leguminous lectin family.

It is found in the cell membrane. It carries out the reaction L-seryl-[protein] + ATP = O-phospho-L-seryl-[protein] + ADP + H(+). The catalysed reaction is L-threonyl-[protein] + ATP = O-phospho-L-threonyl-[protein] + ADP + H(+). This chain is Putative L-type lectin-domain containing receptor kinase I.4 (LECRK14), found in Arabidopsis thaliana (Mouse-ear cress).